Consider the following 144-residue polypeptide: UPF0299 membrane protein MS1271 (144 aa).

Transmembrane regions (helical) follow at residues 5 to 25, 28 to 48, 57 to 77, and 92 to 112; these read IFLF…GEGI, LIPI…IGLT, VFFG…PVSV, and SLLI…GFLG.

This sequence belongs to the UPF0299 family.

Its subcellular location is the cell inner membrane. The protein is UPF0299 membrane protein MS1271 of Mannheimia succiniciproducens (strain KCTC 0769BP / MBEL55E).